Consider the following 107-residue polypeptide: Integration host factor subunit alpha (107 aa).

This sequence belongs to the bacterial histone-like protein family. As to quaternary structure, heterodimer of an alpha and a beta chain.

Functionally, this protein is one of the two subunits of integration host factor, a specific DNA-binding protein that functions in genetic recombination as well as in transcriptional and translational control. This is Integration host factor subunit alpha from Brucella suis (strain ATCC 23445 / NCTC 10510).